The sequence spans 810 residues: Phospholipase D alpha 1 (810 aa).

Residues 1 to 36 constitute a propeptide that is removed on maturation; it reads MAQHLLHGTLHATIYEVDDLHTGGLRSGFFGKILAN. Residues 1–126 enclose the C2 domain; the sequence is MAQHLLHGTL…IHGEEVDQWV (126 aa). Asp187 serves as a coordination point for Ca(2+). The PLD phosphodiesterase 1 domain maps to 327–366; that stretch reads AMFTHHQKIVVVDSEMPSRGGSQMRRIVSFVGGIDLCDGR. Active-site residues include His332, Lys334, and Asp339. His332 is a binding site for a 1,2-diacyl-sn-glycero-3-phosphate. 2 residues coordinate Ca(2+): His372 and His406. Positions 522 and 661 each coordinate a 1,2-diacyl-sn-glycero-3-phosphate. A PLD phosphodiesterase 2 domain is found at 656–683; the sequence is FMIYVHTKMMIVDDEYIIIGSANINQRS. Active-site residues include His661, Lys663, and Asp668. Glu722 contributes to the Ca(2+) binding site.

The protein belongs to the phospholipase D family. C2-PLD subfamily. Ca(2+) is required as a cofactor.

It localises to the cytoplasm. Its subcellular location is the membrane. The enzyme catalyses a 1,2-diacyl-sn-glycero-3-phosphocholine + H2O = a 1,2-diacyl-sn-glycero-3-phosphate + choline + H(+). Functionally, hydrolyzes glycerol-phospholipids at the terminal phosphodiesteric bond. Plays an important role in various cellular processes, including phytohormone action, vesicular trafficking, secretion, cytoskeletal arrangement, meiosis, tumor promotion, pathogenesis, membrane deterioration and senescence. The sequence is that of Phospholipase D alpha 1 (PLD1) from Brassica oleracea var. capitata (Cabbage).